Consider the following 204-residue polypeptide: Ribonuclease HII (204 aa).

Residues 1 to 197 enclose the RNase H type-2 domain; it reads MTLGIDEAGR…KNRILNPKLL (197 aa). A divalent metal cation contacts are provided by Asp6, Glu7, and Asp103.

It belongs to the RNase HII family. It depends on Mn(2+) as a cofactor. The cofactor is Mg(2+).

It localises to the cytoplasm. It carries out the reaction Endonucleolytic cleavage to 5'-phosphomonoester.. Its function is as follows. Endonuclease that specifically degrades the RNA of RNA-DNA hybrids. The sequence is that of Ribonuclease HII from Helicobacter pylori (strain HPAG1).